The sequence spans 332 residues: Ketol-acid reductoisomerase (NADP(+)) (332 aa).

The region spanning 4–184 is the KARI N-terminal Rossmann domain; the sequence is ARMYYDEDAD…GGTRAGILET (181 aa). NADP(+) contacts are provided by residues 27–30, Ser53, Ser55, and 85–88; these read YGSQ and DEVQ. His110 is an active-site residue. Residue Gly136 coordinates NADP(+). In terms of domain architecture, KARI C-terminal knotted spans 185–330; that stretch reads TFREEAETDL…ADLRKMMSWL (146 aa). Residues Asp193, Glu197, Glu229, and Glu233 each coordinate Mg(2+). Ser254 is a binding site for substrate.

It belongs to the ketol-acid reductoisomerase family. Requires Mg(2+) as cofactor.

It carries out the reaction (2R)-2,3-dihydroxy-3-methylbutanoate + NADP(+) = (2S)-2-acetolactate + NADPH + H(+). The catalysed reaction is (2R,3R)-2,3-dihydroxy-3-methylpentanoate + NADP(+) = (S)-2-ethyl-2-hydroxy-3-oxobutanoate + NADPH + H(+). It functions in the pathway amino-acid biosynthesis; L-isoleucine biosynthesis; L-isoleucine from 2-oxobutanoate: step 2/4. The protein operates within amino-acid biosynthesis; L-valine biosynthesis; L-valine from pyruvate: step 2/4. Functionally, involved in the biosynthesis of branched-chain amino acids (BCAA). Catalyzes an alkyl-migration followed by a ketol-acid reduction of (S)-2-acetolactate (S2AL) to yield (R)-2,3-dihydroxy-isovalerate. In the isomerase reaction, S2AL is rearranged via a Mg-dependent methyl migration to produce 3-hydroxy-3-methyl-2-ketobutyrate (HMKB). In the reductase reaction, this 2-ketoacid undergoes a metal-dependent reduction by NADPH to yield (R)-2,3-dihydroxy-isovalerate. The protein is Ketol-acid reductoisomerase (NADP(+)) of Gloeobacter violaceus (strain ATCC 29082 / PCC 7421).